A 444-amino-acid polypeptide reads, in one-letter code: Phosphoglucosamine mutase (444 aa).

The active-site Phosphoserine intermediate is the S102. The Mg(2+) site is built by S102, D241, D243, and D245. S102 is modified (phosphoserine).

Belongs to the phosphohexose mutase family. It depends on Mg(2+) as a cofactor. Activated by phosphorylation.

It carries out the reaction alpha-D-glucosamine 1-phosphate = D-glucosamine 6-phosphate. Catalyzes the conversion of glucosamine-6-phosphate to glucosamine-1-phosphate. This is Phosphoglucosamine mutase from Acidovorax ebreus (strain TPSY) (Diaphorobacter sp. (strain TPSY)).